Consider the following 444-residue polypeptide: C4-dicarboxylate transport protein (444 aa).

Helical transmembrane passes span 17–37 (PFYT…ILLG), 57–77 (LVKM…IAGM), 92–112 (LYFL…ANVV), 139–159 (EQSI…GAFA), 161–181 (GDIL…AMVG), 201–221 (LVAI…AFTI), 234–254 (MLIG…LGAV), 320–340 (IYMT…LSWG), and 368–388 (AATL…ILGI).

Belongs to the dicarboxylate/amino acid:cation symporter (DAACS) (TC 2.A.23) family.

The protein localises to the cell inner membrane. Its function is as follows. Responsible for the transport of dicarboxylates such as succinate, fumarate, and malate from the periplasm across the membrane. This Rhizobium johnstonii (strain DSM 114642 / LMG 32736 / 3841) (Rhizobium leguminosarum bv. viciae) protein is C4-dicarboxylate transport protein.